We begin with the raw amino-acid sequence, 335 residues long: Beta-hexosaminidase (335 aa).

Residues D60, R68, R133, and 163–164 (KH) each bind substrate. H176 functions as the Proton donor/acceptor in the catalytic mechanism. The active-site Nucleophile is the D247.

The protein belongs to the glycosyl hydrolase 3 family. NagZ subfamily.

The protein localises to the cytoplasm. It catalyses the reaction Hydrolysis of terminal non-reducing N-acetyl-D-hexosamine residues in N-acetyl-beta-D-hexosaminides.. The protein operates within cell wall biogenesis; peptidoglycan recycling. Its function is as follows. Plays a role in peptidoglycan recycling by cleaving the terminal beta-1,4-linked N-acetylglucosamine (GlcNAc) from peptide-linked peptidoglycan fragments, giving rise to free GlcNAc, anhydro-N-acetylmuramic acid and anhydro-N-acetylmuramic acid-linked peptides. This Xylella fastidiosa (strain M12) protein is Beta-hexosaminidase.